The chain runs to 512 residues: Chitin synthase regulatory factor 2 (512 aa).

6 Sel1-like repeats span residues 224–260, 261–296, 297–333, 337–377, 378–414, and 415–452; these read SEALYLLAVCYGTGALRTEINEKEAYRLYKMAADLNH, VQAAYRVAICLQMGFGVTQNTEEAIHYFFRAASGQH, VGAMHRMALIYFRGLMSVKRDPVKAMYYLNLGALEAD, PQAL…KYGL, KDAQLRVARCFELGQLECDINLVRSFVWYRRLARKRN, and PEAMWKLSQFYLNGVDDVIYPNPELANEWAKAAAYKNH. C509 carries the cysteine methyl ester modification. C509 carries S-farnesyl cysteine lipidation. Positions 510 to 512 are cleaved as a propeptide — removed in mature form; it reads IIS.

The protein resides in the membrane. Involved in chitin biosynthesis. This Schizosaccharomyces pombe (strain 972 / ATCC 24843) (Fission yeast) protein is Chitin synthase regulatory factor 2 (chr2).